The sequence spans 249 residues: Proteasome subunit alpha type-4 (249 aa).

It belongs to the peptidase T1A family. As to quaternary structure, the 26S proteasome consists of a 20S proteasome core and two 19S regulatory subunits. The 20S proteasome core is composed of 28 subunits that are arranged in four stacked rings, resulting in a barrel-shaped structure. The two end rings are each formed by seven alpha subunits, and the two central rings are each formed by seven beta subunits. The catalytic chamber with the active sites is on the inside of the barrel.

It is found in the cytoplasm. The protein localises to the nucleus. In terms of biological role, the proteasome is a multicatalytic proteinase complex which is characterized by its ability to cleave peptides with Arg, Phe, Tyr, Leu, and Glu adjacent to the leaving group at neutral or slightly basic pH. The proteasome has an ATP-dependent proteolytic activity. The polypeptide is Proteasome subunit alpha type-4 (PAC1) (Petunia hybrida (Petunia)).